The chain runs to 336 residues: Nicotinate-nucleotide--dimethylbenzimidazole phosphoribosyltransferase (336 aa).

Glutamate 304 (proton acceptor) is an active-site residue.

This sequence belongs to the CobT family.

The catalysed reaction is 5,6-dimethylbenzimidazole + nicotinate beta-D-ribonucleotide = alpha-ribazole 5'-phosphate + nicotinate + H(+). It participates in nucleoside biosynthesis; alpha-ribazole biosynthesis; alpha-ribazole from 5,6-dimethylbenzimidazole: step 1/2. Its function is as follows. Catalyzes the synthesis of alpha-ribazole-5'-phosphate from nicotinate mononucleotide (NAMN) and 5,6-dimethylbenzimidazole (DMB). The protein is Nicotinate-nucleotide--dimethylbenzimidazole phosphoribosyltransferase of Mesorhizobium japonicum (strain LMG 29417 / CECT 9101 / MAFF 303099) (Mesorhizobium loti (strain MAFF 303099)).